Consider the following 816-residue polypeptide: Leucine--tRNA ligase (816 aa).

Positions 40 to 51 (SYPSGSQLHAGH) match the 'HIGH' region motif. Positions 576-580 (KMSKS) match the 'KMSKS' region motif. Residue Lys-579 coordinates ATP.

This sequence belongs to the class-I aminoacyl-tRNA synthetase family.

The protein resides in the cytoplasm. It catalyses the reaction tRNA(Leu) + L-leucine + ATP = L-leucyl-tRNA(Leu) + AMP + diphosphate. This Clostridium perfringens (strain 13 / Type A) protein is Leucine--tRNA ligase.